A 264-amino-acid polypeptide reads, in one-letter code: Glutamate racemase (264 aa).

Residues 10-11 and 42-43 contribute to the substrate site; these read DS and YG. The Proton donor/acceptor role is filled by C73. 74–75 provides a ligand contact to substrate; the sequence is NT. C183 serves as the catalytic Proton donor/acceptor. 184-185 provides a ligand contact to substrate; the sequence is TH.

The protein belongs to the aspartate/glutamate racemases family.

The catalysed reaction is L-glutamate = D-glutamate. The protein operates within cell wall biogenesis; peptidoglycan biosynthesis. Provides the (R)-glutamate required for cell wall biosynthesis. This chain is Glutamate racemase, found in Streptococcus equi subsp. zooepidemicus (strain H70).